Here is a 137-residue protein sequence, read N- to C-terminus: ATP synthase epsilon chain (137 aa).

The protein belongs to the ATPase epsilon chain family. As to quaternary structure, F-type ATPases have 2 components, CF(1) - the catalytic core - and CF(0) - the membrane proton channel. CF(1) has five subunits: alpha(3), beta(3), gamma(1), delta(1), epsilon(1). CF(0) has three main subunits: a, b and c.

It is found in the cell membrane. In terms of biological role, produces ATP from ADP in the presence of a proton gradient across the membrane. In Caldicellulosiruptor bescii (strain ATCC BAA-1888 / DSM 6725 / KCTC 15123 / Z-1320) (Anaerocellum thermophilum), this protein is ATP synthase epsilon chain.